The primary structure comprises 2344 residues: Genome polyprotein (2344 aa).

The SF3 helicase domain occupies 492–653; that stretch reads QKVISDLHTM…ESWQATRHGS (162 aa). Residue 522–529 participates in ATP binding; the sequence is GAPGIGKT. Tyr-1014 carries the post-translational modification O-(5'-phospho-RNA)-tyrosine. The residue at position 1014 (Tyr-1014) is an O-UMP-tyrosine; transient. In terms of domain architecture, Peptidase C24 spans 1109 to 1244; the sequence is GLPGFMRHNG…SKMCTLIDLT (136 aa). Catalysis depends on for 3CLpro activity residues His-1135, Asp-1152, and Cys-1212. In terms of domain architecture, RdRp catalytic spans 1495-1619; sequence SDFLCLDYSK…AMTPMMVSLL (125 aa). Cys-1584 and Cys-1591 are disulfide-bonded. Residues 1771 to 1796 are disordered; the sequence is RTAPQGEAAGTATTASVPGTTTDGMD. Positions 1778–1794 are enriched in low complexity; that stretch reads AAGTATTASVPGTTTDG.

Homodimer. As to quaternary structure, homomultimer. Interacts with host type II histo-blood group structures antigens at the surface of target cells. It depends on Mn(2+) as a cofactor. Specific enzymatic cleavages by its own cysteine protease yield mature proteins. The protease cleaves itself from the nascent polyprotein autocatalytically. Precursor p41 can be cleaved by viral 3CLpro into protein p19 and VPg, or cleaved by host protease into protein p23/2 and protein p18. Post-translationally, VPg is uridylylated by the polymerase and is covalently attached to the 5'-end of the polyadenylated genomic and subgenomic RNAs. This uridylylated form acts as a nucleotide-peptide primer for the polymerase.

It localises to the host cytoplasm. Its subcellular location is the host endoplasmic reticulum. The protein resides in the virion. It carries out the reaction a ribonucleoside 5'-triphosphate + H2O = a ribonucleoside 5'-diphosphate + phosphate + H(+). The catalysed reaction is Endopeptidase with a preference for cleavage when the P1 position is occupied by Glu-|-Xaa and the P1' position is occupied by Gly-|-Yaa.. It catalyses the reaction RNA(n) + a ribonucleoside 5'-triphosphate = RNA(n+1) + diphosphate. In terms of biological role, together with NTPase and NS4, initiates the formation of the replication complex. Induces the proliferation of the host smooth ER membranes forming long tubular structures. These remodeled membranes probably form the viral factories that contain the replication complex. Functionally, displays NTPase activity, but no helicase activity. Induces the formation of convoluted membranes derived from the host ER. These remodeled membranes probably form the viral factories that contain the replication complex. Together with NS2 and NS4, initiates the formation of the replication complex. Probable key protein responsible for the formation of membrane alterations by the virus. Induces the formation of convoluted membranes derived from the host ER. These remodeled membranes probably form the viral factories that contain the replication complex. Together with NS2 and NTPase, initiates the formation of the replication complex. Its function is as follows. Viral genome-linked protein is covalently linked to the 5'-end of the positive-strand, negative-strand genomic RNAs and subgenomic RNA. Acts as a genome-linked replication primer. May recruit ribosome to viral RNA thereby promoting viral proteins translation. Interacts with host translation initiation complex to allow the translation of viral proteins. In terms of biological role, processes the polyprotein. 3CLpro-RdRp is first released by autocleavage, then all other proteins are cleaved. May cleave polyadenylate-binding protein thereby inhibiting cellular translation. Functionally, replicates genomic and antigenomic RNA by recognizing replications specific signals. Also transcribes a subgenomic mRNA by initiating RNA synthesis internally on antigenomic RNA. This sgRNA codes for structural proteins. Catalyzes the covalent attachment VPg with viral RNAs. Capsid protein VP60 self assembles to form an icosahedral capsid with a T=3 symmetry, about 35 nm in diameter, and consisting of 180 capsid proteins. A smaller form of capsid with a diameter of 23 nm might be capsid proteins assembled as icosahedron with T=1 symmetry. The capsid encapsulate VP2 proteins and genomic or subgenomic RNA. Attaches virion to target cells by binding histo-blood group antigens, inducing endocytosis of the viral particle. Acidification of the endosome induces conformational change of capsid protein thereby injecting virus genomic RNA into host cytoplasm. This chain is Genome polyprotein, found in Rabbit hemorrhagic disease virus (strain SD) (Ra/LV/RHDV/SD/1989/FR).